Consider the following 302-residue polypeptide: MLEELNAKEKYSFNKLQKRLRRNVGQAIADFNMIEEGDKVMVCLSGGKDSFAMLDILMSLKASAPIHFDLVAVNLDQKQPGFPEHVLPEYLTTLGIDFKIVEEDTYAIVKEKVPEGKTTCALCSRLRRGILYRTAQELGCTKIALGHHRDDILETLFLNMFYGGKLKSMPPKLVSDDGKNVVIRPLAYCKEKDLVRYAEVKAFPIIPCNLCGSQENLQRQAIKQMMQEWDRRFPGRLETMFTAIQDVIPSHLLDHKLFDFKSINRDSGIIDGGDKAFDPPELPKAPLLDIDEMDMLDVIEVR.

The PP-loop motif signature appears at 45-50; sequence SGGKDS. [4Fe-4S] cluster-binding residues include Cys120, Cys123, and Cys211.

Belongs to the TtcA family. In terms of assembly, homodimer. The cofactor is Mg(2+). Requires [4Fe-4S] cluster as cofactor.

Its subcellular location is the cytoplasm. It carries out the reaction cytidine(32) in tRNA + S-sulfanyl-L-cysteinyl-[cysteine desulfurase] + AH2 + ATP = 2-thiocytidine(32) in tRNA + L-cysteinyl-[cysteine desulfurase] + A + AMP + diphosphate + H(+). Its pathway is tRNA modification. Functionally, catalyzes the ATP-dependent 2-thiolation of cytidine in position 32 of tRNA, to form 2-thiocytidine (s(2)C32). The sulfur atoms are provided by the cysteine/cysteine desulfurase (IscS) system. This chain is tRNA-cytidine(32) 2-sulfurtransferase, found in Aeromonas hydrophila subsp. hydrophila (strain ATCC 7966 / DSM 30187 / BCRC 13018 / CCUG 14551 / JCM 1027 / KCTC 2358 / NCIMB 9240 / NCTC 8049).